A 428-amino-acid polypeptide reads, in one-letter code: Histidinol dehydrogenase (428 aa).

Residues Ser-234, Gln-256, and His-259 each coordinate substrate. Gln-256 and His-259 together coordinate Zn(2+). Residues Glu-323 and His-324 each act as proton acceptor in the active site. Substrate contacts are provided by His-324, Asp-357, Glu-411, and His-416. Asp-357 serves as a coordination point for Zn(2+). A Zn(2+)-binding site is contributed by His-416.

It belongs to the histidinol dehydrogenase family. Zn(2+) is required as a cofactor.

The enzyme catalyses L-histidinol + 2 NAD(+) + H2O = L-histidine + 2 NADH + 3 H(+). It participates in amino-acid biosynthesis; L-histidine biosynthesis; L-histidine from 5-phospho-alpha-D-ribose 1-diphosphate: step 9/9. Its function is as follows. Catalyzes the sequential NAD-dependent oxidations of L-histidinol to L-histidinaldehyde and then to L-histidine. This is Histidinol dehydrogenase from Campylobacter jejuni subsp. jejuni serotype O:2 (strain ATCC 700819 / NCTC 11168).